Consider the following 643-residue polypeptide: Probable potassium transport system protein Kup 2 (643 aa).

The disordered stretch occupies residues 1–20; sequence MSSHVPSFLRGTPDMTAHGG. Transmembrane regions (helical) follow at residues 27 to 47, 70 to 90, 120 to 140, 157 to 177, 185 to 205, 231 to 251, 267 to 287, 300 to 320, 357 to 377, 389 to 409, 419 to 439, and 440 to 460; these read VAGLMLAAIGVVFGDIGTSPL, VLSLVFWAITIIVSFKYVIII, LMVSALGIFAAALFYGDSIIT, PHLEQWVVPLTIVILFVLFAI, VGKMFGPVMLVWFLTLAILGI, GWHAFLALGSVVLAVTGAEAL, WYLLVLPALILNYFGQGALLI, LAPASLALPLVILATLATVIA, IYLPFVNWLLMCMVMVLVVGF, VAVTGTMVIDALLVGTVMLLI, WLIGGFLVVDLAFFLANSIKI, and PDGGWFPLVVGGLLFTILTTW.

Belongs to the HAK/KUP transporter (TC 2.A.72) family.

The protein resides in the cell inner membrane. It carries out the reaction K(+)(in) + H(+)(in) = K(+)(out) + H(+)(out). Functionally, transport of potassium into the cell. Likely operates as a K(+):H(+) symporter. In Paramagnetospirillum magneticum (strain ATCC 700264 / AMB-1) (Magnetospirillum magneticum), this protein is Probable potassium transport system protein Kup 2.